Reading from the N-terminus, the 431-residue chain is Glycolipid 2-alpha-mannosyltransferase 1 (431 aa).

At methionine 1–arginine 9 the chain is on the cytoplasmic side. A helical; Signal-anchor for type II membrane protein transmembrane segment spans residues leucine 10–threonine 28. Residues arginine 29–alanine 431 lie on the Lumenal side of the membrane. Residues proline 35–proline 44 are compositionally biased toward polar residues. The disordered stretch occupies residues proline 35–lysine 73. A compositionally biased stretch (gly residues) spans alanine 55–serine 64. Glutamate 318 acts as the Nucleophile in catalysis.

It belongs to the glycosyltransferase 15 family.

The protein localises to the golgi apparatus membrane. The protein operates within protein modification; protein glycosylation. Functionally, involved in O-glycosylation of cell wall and secreted proteins. Transfers an alpha-D-mannosyl residue from GDP-mannose into lipid-linked oligosaccharide, forming an alpha-(1-&gt;2)-D-mannosyl-D-mannose linkage. Mainly responsible for the addition of the second mannose residue in an O-linked mannose pentamer. Can also substitute for MNT2 by adding the third mannose residue. Important for adherence to host surfaces and for virulence. The sequence is that of Glycolipid 2-alpha-mannosyltransferase 1 (MNT1) from Candida albicans (strain SC5314 / ATCC MYA-2876) (Yeast).